A 616-amino-acid chain; its full sequence is Sulfite reductase [NADPH] flavoprotein alpha-component (616 aa).

Positions Leu-80 to Leu-218 constitute a Flavodoxin-like domain. FMN is bound by residues Ser-86–Ala-91, Ser-133–Gly-136, and Leu-169–Cys-178. An FAD-binding FR-type domain is found at Gln-251–Pro-465. FAD-binding positions include Thr-339, Gly-373, Arg-403 to Ser-406, Thr-421 to Gly-423, Tyr-427, and Gly-436 to Ser-439. NADP(+) is bound by residues Ser-536 to Arg-537, Lys-542 to Gln-546, and Asp-578. Tyr-616 provides a ligand contact to FAD.

The protein belongs to the NADPH-dependent sulphite reductase flavoprotein subunit CysJ family. In the N-terminal section; belongs to the flavodoxin family. It in the C-terminal section; belongs to the flavoprotein pyridine nucleotide cytochrome reductase family. In terms of assembly, alpha(8)-beta(8). The alpha component is a flavoprotein, the beta component is a hemoprotein. FAD serves as cofactor. It depends on FMN as a cofactor.

It catalyses the reaction hydrogen sulfide + 3 NADP(+) + 3 H2O = sulfite + 3 NADPH + 4 H(+). It functions in the pathway sulfur metabolism; hydrogen sulfide biosynthesis; hydrogen sulfide from sulfite (NADPH route): step 1/1. Functionally, component of the sulfite reductase complex that catalyzes the 6-electron reduction of sulfite to sulfide. This is one of several activities required for the biosynthesis of L-cysteine from sulfate. The flavoprotein component catalyzes the electron flow from NADPH -&gt; FAD -&gt; FMN to the hemoprotein component. In Vibrio vulnificus (strain CMCP6), this protein is Sulfite reductase [NADPH] flavoprotein alpha-component.